Reading from the N-terminus, the 237-residue chain is LexA repressor (237 aa).

The H-T-H motif DNA-binding region spans 26 to 46 (FDEMKDALDLRSKSGIHRLIT). Residues S158 and K196 each act as for autocatalytic cleavage activity in the active site.

This sequence belongs to the peptidase S24 family. In terms of assembly, homodimer.

The enzyme catalyses Hydrolysis of Ala-|-Gly bond in repressor LexA.. Functionally, represses a number of genes involved in the response to DNA damage (SOS response), including recA and lexA. In the presence of single-stranded DNA, RecA interacts with LexA causing an autocatalytic cleavage which disrupts the DNA-binding part of LexA, leading to derepression of the SOS regulon and eventually DNA repair. The chain is LexA repressor from Rhodopseudomonas palustris (strain BisA53).